The primary structure comprises 683 residues: U4/U6 small nuclear ribonucleoprotein Prp3 (683 aa).

The 87-residue stretch at 1 to 87 (MALSKRELDE…HSKSSSDRSR (87 aa)) folds into the PWI domain. Residues 73 to 107 (GRSSRHSKSSSDRSRKRELKEVFGDDSEISKESSG) show a composition bias toward basic and acidic residues. The interval 73–135 (GRSSRHSKSS…IPGPPSESPG (63 aa)) is disordered. A Glycyl lysine isopeptide (Lys-Gly) (interchain with G-Cter in SUMO2) cross-link involves residue lysine 139. A disordered region spans residues 161 to 183 (SFISPPAPQPKTPSSSQPERLPI). Serine 164 bears the Phosphoserine mark. Residues lysine 244 and lysine 252 each participate in a glycyl lysine isopeptide (Lys-Gly) (interchain with G-Cter in SUMO2) cross-link. The segment at 416–550 (NLVEHPAQLN…VHISVYRVRN (135 aa)) is mediates interaction with SART3. Serine 619 is modified (phosphoserine).

In terms of assembly, component of the precatalytic spliceosome (spliceosome B complex). Component of the U4/U6-U5 tri-snRNP complex, a building block of the precatalytic spliceosome (spliceosome B complex). The U4/U6-U5 tri-snRNP complex is composed of the U4, U6 and U5 snRNAs and at least PRPF3, PRPF4, PRPF6, PRPF8, PRPF31, SNRNP200, TXNL4A, SNRNP40, SNRPB, SNRPD1, SNRPD2, SNRPD3, SNRPE, SNRPF, SNRPG, DDX23, CD2BP2, PPIH, SNU13, EFTUD2, SART1 and USP39, plus LSM2, LSM3, LSM4, LSM5, LSM6, LSM7 and LSM8. Interacts directly with PRPF4. Part of a heteromeric complex containing PPIH, PRPF3 and PRPF4 that is stable in the absence of RNA. Interacts with SART3; the interaction is direct and recruits the deubiquitinase USP4 to PRPF3. Interacts with PRPF19. Interacts ('Lys-63'-linked polyubiquitinated) with PRPF8 (via the MPN (JAB/Mov34) domain); may stabilize the U4/U6-U5 tri-snRNP complex. Interacts with ERCC6. Post-translationally, ubiquitinated. Undergoes 'Lys-63'-linked polyubiquitination by PRPF19 and deubiquitination by USP4. 'Lys-63'-linked ubiquitination increases the affinity for PRPF8 and may regulate the assembly of the U4/U6-U5 tri-snRNP complex.

It is found in the nucleus. Its subcellular location is the nucleus speckle. In terms of biological role, plays a role in pre-mRNA splicing as component of the U4/U6-U5 tri-snRNP complex that is involved in spliceosome assembly, and as component of the precatalytic spliceosome (spliceosome B complex). The protein is U4/U6 small nuclear ribonucleoprotein Prp3 (Prpf3) of Mus musculus (Mouse).